The sequence spans 127 residues: Sulfiredoxin (127 aa).

The protein belongs to the sulfiredoxin family. The cofactor is Mg(2+). In terms of processing, forms a transient disulfide bond with TSA1 during the reduction of cysteine sulfinic acid (-SO2H).

It localises to the cytoplasm. The protein localises to the nucleus. It catalyses the reaction S-hydroxy-S-oxy-L-cysteinyl-[peroxiredoxin] + [protein]-dithiol + ATP = S-hydroxy-L-cysteinyl-[peroxiredoxin] + [protein]-disulfide + ADP + phosphate. Contributes to oxidative stress resistance by reducing cysteine-sulfinic acid formed under exposure to oxidants in the peroxiredoxin TSA1. May catalyze the reduction in a multi-step process by acting both as a specific phosphotransferase and as thioltransferase. The polypeptide is Sulfiredoxin (Saccharomyces cerevisiae (strain ATCC 204508 / S288c) (Baker's yeast)).